A 110-amino-acid polypeptide reads, in one-letter code: Small ribosomal subunit protein bS16 (110 aa).

Residues 81 to 104 show a composition bias toward basic and acidic residues; that stretch reads VRPAEVLGKQKQEKERSAKKKDAT. The tract at residues 81-110 is disordered; that stretch reads VRPAEVLGKQKQEKERSAKKKDATASETSE.

It belongs to the bacterial ribosomal protein bS16 family.

The polypeptide is Small ribosomal subunit protein bS16 (Prochlorococcus marinus (strain NATL1A)).